The following is a 366-amino-acid chain: Tetraacyldisaccharide 4'-kinase (366 aa).

Position 65-72 (65-72 (TVGGTGKT)) interacts with ATP. Positions 343–366 (AKSTPASGGATGLNKEHQDGQPAA) are disordered. Residues 356–366 (NKEHQDGQPAA) show a composition bias toward basic and acidic residues.

This sequence belongs to the LpxK family.

It carries out the reaction a lipid A disaccharide + ATP = a lipid IVA + ADP + H(+). The protein operates within glycolipid biosynthesis; lipid IV(A) biosynthesis; lipid IV(A) from (3R)-3-hydroxytetradecanoyl-[acyl-carrier-protein] and UDP-N-acetyl-alpha-D-glucosamine: step 6/6. Functionally, transfers the gamma-phosphate of ATP to the 4'-position of a tetraacyldisaccharide 1-phosphate intermediate (termed DS-1-P) to form tetraacyldisaccharide 1,4'-bis-phosphate (lipid IVA). The sequence is that of Tetraacyldisaccharide 4'-kinase from Cupriavidus pinatubonensis (strain JMP 134 / LMG 1197) (Cupriavidus necator (strain JMP 134)).